The sequence spans 317 residues: Homoserine O-acetyltransferase (317 aa).

Residue Cys142 is the Acyl-thioester intermediate of the active site. Positions 163 and 192 each coordinate substrate. The active-site Proton acceptor is His235. Residue Glu237 is part of the active site. Position 249 (Arg249) interacts with substrate.

This sequence belongs to the MetA family.

The protein localises to the cytoplasm. The catalysed reaction is L-homoserine + acetyl-CoA = O-acetyl-L-homoserine + CoA. Its pathway is amino-acid biosynthesis; L-methionine biosynthesis via de novo pathway; O-acetyl-L-homoserine from L-homoserine: step 1/1. Its function is as follows. Transfers an acetyl group from acetyl-CoA to L-homoserine, forming acetyl-L-homoserine. This Rhizorhabdus wittichii (strain DSM 6014 / CCUG 31198 / JCM 15750 / NBRC 105917 / EY 4224 / RW1) (Sphingomonas wittichii) protein is Homoserine O-acetyltransferase.